The sequence spans 204 residues: Peroxynitrite isomerase (204 aa).

A GXWXGXG motif is present at residues Gly21–Gly27. Position 195 (His195) interacts with heme b.

The protein belongs to the nitrobindin family. Homodimer. Heme b is required as a cofactor.

It catalyses the reaction peroxynitrite = nitrate. Its pathway is nitrogen metabolism. Functionally, heme-binding protein able to scavenge peroxynitrite and to protect free L-tyrosine against peroxynitrite-mediated nitration, by acting as a peroxynitrite isomerase that converts peroxynitrite to nitrate. Therefore, this protein likely plays a role in peroxynitrite sensing and in the detoxification of reactive nitrogen and oxygen species (RNS and ROS, respectively). Is able to bind nitric oxide (NO) in vitro, but may act as a sensor of peroxynitrite levels in vivo. The polypeptide is Peroxynitrite isomerase (Arthrobacter sp. (strain FB24)).